A 573-amino-acid polypeptide reads, in one-letter code: Chaperone Ric-8 (573 aa).

Basic and acidic residues predominate over residues Glu-308 to Glu-324. Disordered stretches follow at residues Glu-308–Ala-329 and Gly-473–Gln-493. Residues Ser-477, Ser-478, Ser-480, and Ser-483 each carry the phosphoserine modification.

The protein belongs to the synembryn family. Interacts with GDP-bound G(i)-alpha protein G-i-alpha-65A. Does not interact with G-alpha proteins when they are in complex with subunits beta and gamma. Interacts with Frq2 in a Ca(2+)-independent manner but does not interact with Frq1. In terms of tissue distribution, expression in the embryo is primarily neural.

Its subcellular location is the cytoplasm. It localises to the cell cortex. The protein localises to the presynapse. Functionally, chaperone that specifically binds and folds some, but not all, nascent G alpha proteins prior to G protein heterotrimer formation, promoting their stability and activity. Also acts as a guanine nucleotide exchange factor (GEF) for G alpha proteins by stimulating exchange of bound GDP for free GTP. Plays a key role in asymmetric spindle positioning, a step for asymmetric cell division that generates cell diversity during development by activating G(i) alpha protein independently of G-protein coupled receptors. Required during gastrulation and sensory organ precursor (SOP) formation. Plays a role in positively regulating synapse number and neurotransmitter release. The protein is Chaperone Ric-8 (ric8a) of Drosophila melanogaster (Fruit fly).